The following is a 156-amino-acid chain: Riboflavin synthase (156 aa).

This sequence belongs to the DMRL synthase family.

It catalyses the reaction 2 6,7-dimethyl-8-(1-D-ribityl)lumazine + H(+) = 5-amino-6-(D-ribitylamino)uracil + riboflavin. The protein operates within cofactor biosynthesis; riboflavin biosynthesis; riboflavin from 2-hydroxy-3-oxobutyl phosphate and 5-amino-6-(D-ribitylamino)uracil: step 2/2. This is Riboflavin synthase (ribC) from Methanocaldococcus jannaschii (strain ATCC 43067 / DSM 2661 / JAL-1 / JCM 10045 / NBRC 100440) (Methanococcus jannaschii).